Consider the following 657-residue polypeptide: SAGA complex subunit SGF73 (657 aa).

The Zn(2+) site is built by C78, C81, H93, and C98. Disordered regions lie at residues 98–225, 287–353, 469–532, and 572–636; these read CAGA…TEKH, EKRA…VNLT, QQQQ…SQDT, and ESNQ…NVSG. The span at 107-118 shows a compositional bias: basic and acidic residues; it reads TDPRDESTRETI. Over residues 131 to 163 the composition is skewed to acidic residues; sequence DDDNSNDNNNDDDDDDDNDDNEDDDDADDDDDN. Polar residues-rich tracts occupy residues 174-193 and 200-210; these read SSFN…TPNM and TGTPQTFSSSI. The region spanning 220–286 is the SCA7 domain; it reads NPTEKHLIDF…EHQTKIGAAA (67 aa). Over residues 306–321 the composition is skewed to basic residues; that stretch reads QKKHTQQQKQGQRSKQ. Composition is skewed to low complexity over residues 325-336 and 469-493; these read NGGKSAKNGGKS and QQQQ…QPTQ. Polar residues predominate over residues 504-516; sequence ATNSSFNANVSSK. The span at 517-526 shows a compositional bias: low complexity; sequence QIQQQQQQQQ. Residues 572-583 show a composition bias toward polar residues; the sequence is ESNQDSHLSGTH. A compositionally biased stretch (low complexity) spans 584–594; it reads NNNSSKNGNNN. The span at 600–636 shows a compositional bias: polar residues; it reads ASISSPNTSVNSIQSPPSVNSVNGSGQGVSTGINVSG.

The protein belongs to the ataxin-7 family. As to quaternary structure, component of the 1.8 MDa SAGA (Spt-Ada-Gcn5 acetyltransferase) complex, which is composed of 19 subunits TRA1, SPT7, TAF5, NGG1/ADA3, SGF73, SPT20/ADA5, SPT8, TAF12, TAF6, HFI1/ADA1, UBP8, GCN5, ADA2, SPT3, SGF29, TAF10, TAF9, SGF11 and SUS1. The SAGA complex is composed of 4 modules, namely the HAT (histone acetyltransferase) module (GCN5, ADA2, NGG1/ADA3 and SGF29), the DUB (deubiquitinating) module (UBP8, SGF11, SGF73 and SUS1), the core or TAF (TBP-associated factor) module (TAF5, TAF6, TAF9, TAF10 and TAF12), and the Tra1 or SPT (Suppressor of Ty) module (TRA1, HFI1/ADA1, SPT3, SPT7, SPT8 and SPT20/ADA5). The Tra1/SPT module binds activators, the core module recruits TBP (TATA-binding protein), the HAT module contains the histone H3 acetyltransferase GCN5, and the DUB module comprises the histone H2B deubiquitinase UBP8. Also identified in an altered form of SAGA, named SALSA (SAGA altered, Spt8 absent) or SLIK (SAGA-like) complex, which contains a C-terminal truncated form of SPT7 and is missing SPT8. However, it has been shown that the SAGA and SAGA-like SALSA/SLIK transcriptional coactivators are structurally and biochemically equivalent.

It is found in the nucleus. The protein resides in the cytoplasm. Functionally, component of the transcription coactivator SAGA complex. SAGA acts as a general cofactor required for essentially all RNA polymerase II transcription. At the promoters, SAGA is required for transcription pre-initiation complex (PIC) recruitment. It influences RNA polymerase II transcriptional activity through different activities such as TBP interaction (via core/TAF module) and promoter selectivity, interaction with transcription activators (via Tra1/SPT module), and chromatin modification through histone acetylation (via HAT module) and deubiquitination (via DUB module). SAGA preferentially acetylates histones H3 (to form H3K9ac, H3K14ac, H3K18ac and H3K23ac) and H2B and deubiquitinates histone H2B. SAGA interacts with DNA via upstream activating sequences (UASs). Also identified in a modified version of SAGA named SALSA or SLIK. The cleavage of SPT7 and the absence of the SPT8 subunit in SLIK neither drive any major conformational differences in its structure compared with SAGA, nor significantly affect HAT, DUB, or DNA-binding activities. SGF73 tethers the DUB module to the rest of the SAGA complex through its central domain and activates the ubiquitin hydrolase UBP8 by maintaining its catalytic domain in an active conformation. SGF73 mediates recruitment of the TREX-2 mRNA export factors SAC3 and THP1 to SAGA, which is crucial to target TREX-2 to the nuclear pore complex (NPC) necessary for export of mRNA. Upon environmental stress, involved in the bypass of the canonical mRNA export process for the immediate export of stress-related transcripts to maintain proteostasis. This Saccharomyces cerevisiae (strain ATCC 204508 / S288c) (Baker's yeast) protein is SAGA complex subunit SGF73 (SGF73).